Reading from the N-terminus, the 952-residue chain is Probable outer membrane protein pmp16 (952 aa).

The N-terminal stretch at 1 to 27 is a signal peptide; sequence MSKTPPKFLFYLGNFTACMFGMTPAVY. The Autotransporter domain occupies 646–952; sequence GDLATTPLWQ…HLQAGSTLKF (307 aa).

Belongs to the PMP outer membrane protein family.

It is found in the secreted. The protein localises to the cell wall. The protein resides in the cell outer membrane. The protein is Probable outer membrane protein pmp16 (pmp16) of Chlamydia pneumoniae (Chlamydophila pneumoniae).